Here is a 74-residue protein sequence, read N- to C-terminus: Exodeoxyribonuclease 7 small subunit (74 aa).

The protein belongs to the XseB family. As to quaternary structure, heterooligomer composed of large and small subunits.

The protein resides in the cytoplasm. The enzyme catalyses Exonucleolytic cleavage in either 5'- to 3'- or 3'- to 5'-direction to yield nucleoside 5'-phosphates.. In terms of biological role, bidirectionally degrades single-stranded DNA into large acid-insoluble oligonucleotides, which are then degraded further into small acid-soluble oligonucleotides. The chain is Exodeoxyribonuclease 7 small subunit from Neisseria meningitidis serogroup A / serotype 4A (strain DSM 15465 / Z2491).